The sequence spans 119 residues: UPF0102 protein PM0647 (119 aa).

The protein belongs to the UPF0102 family.

This Pasteurella multocida (strain Pm70) protein is UPF0102 protein PM0647.